The following is a 1098-amino-acid chain: Platelet-derived growth factor receptor beta (1098 aa).

A signal peptide spans 1–31; the sequence is MGLPGVIPALVLRGQLLLSVLWLLGPQTSRG. Residues 32–531 are Extracellular-facing; sequence LVITPPGPEF…VVPHSLPFKV (500 aa). 5 Ig-like C2-type domains span residues 33–119, 128–209, 213–308, 330–402, and 415–523; these read VITP…YIFV, PMDS…YSLQ, INVS…INIS, HRSR…HEDD, and PVRV…VTVV. 3 N-linked (GlcNAc...) asparagine glycosylation sites follow: N44, N88, and N102. C53 and C99 are joined by a disulfide. C148 and C189 are oxidised to a cystine. N214 carries an N-linked (GlcNAc...) asparagine glycan. C234 and C290 are disulfide-bonded. N-linked (GlcNAc...) asparagine glycosylation is found at N291, N306, N353, N370, N444, N467, and N478. Cysteines 435 and 507 form a disulfide. The chain crosses the membrane as a helical span at residues 532–552; that stretch reads VVISAILALVVLTVISLIILI. At 553 to 1098 the chain is on the cytoplasmic side; that stretch reads MLWQKKPRYE…PLAEAEDSFL (546 aa). Y561, Y578, and Y580 each carry phosphotyrosine; by autocatalysis. Positions 599–961 constitute a Protein kinase domain; that stretch reads LVLGRTLGSG…QLVLLLERLL (363 aa). ATP contacts are provided by residues 605–613 and K633; that span reads LGSGAFGQV. Y685 is subject to Phosphotyrosine; by ABL1 and ABL2. A phosphotyrosine; by autocatalysis mark is found at Y715, Y739, Y750, Y762, Y770, Y774, and Y777. Residue D825 is the Proton acceptor of the active site. The residue at position 856 (Y856) is a Phosphotyrosine; by autocatalysis. A phosphotyrosine; by ABL1 and ABL2 mark is found at Y933 and Y969. Y1008 and Y1020 each carry phosphotyrosine; by autocatalysis. A disordered region spans residues 1016–1098; it reads SDNDYIIPLP…PLAEAEDSFL (83 aa). The segment covering 1042–1059 has biased composition (polar residues); the sequence is SLASSTLNEVNTSSTISC. The segment covering 1062 to 1082 has biased composition (low complexity); the sequence is PLELQEEPQQAEPEAQLEQPQ.

The protein belongs to the protein kinase superfamily. Tyr protein kinase family. CSF-1/PDGF receptor subfamily. As to quaternary structure, interacts with homodimeric PDGFB and PDGFD, and with heterodimers formed by PDGFA and PDGFB. May also interact with homodimeric PDGFC. Monomer in the absence of bound ligand. Interaction with homodimeric PDGFB, heterodimers formed by PDGFA and PDGFB or homodimeric PDGFD, leads to receptor dimerization, where both PDGFRA homodimers and heterodimers with PDGFRB are observed. Interacts with SH2B2/APS. Interacts directly (tyrosine phosphorylated) with SHB. Interacts (tyrosine phosphorylated) with PIK3R1 and RASA1. Interacts (tyrosine phosphorylated) with CBL. Interacts (tyrosine phosphorylated) with SRC and SRC family kinases. Interacts (tyrosine phosphorylated) with PIK3C2B, maybe indirectly. Interacts (tyrosine phosphorylated) with SHC1, GRB7, GRB10 and NCK1. Interaction with GRB2 is mediated by SHC1. Interacts (via C-terminus) with NHERF1. In terms of processing, autophosphorylated on tyrosine residues upon ligand binding. Autophosphorylation occurs in trans, i.e. one subunit of the dimeric receptor phosphorylates tyrosine residues on the other subunit. Phosphorylation at Tyr-578, and to a lesser degree, Tyr-580 is important for interaction with SRC. Phosphorylation at Tyr-715 is important for interaction with GRB2. Phosphorylation at Tyr-739 and Tyr-750 is important for interaction with PIK3R1. Phosphorylation at Tyr-750 is important for interaction with NCK1. Phosphorylation at Tyr-770 and Tyr-856 is important for interaction with RASA1/GAP. Phosphorylation at Tyr-856 is important for efficient phosphorylation of PLCG1 and PTPN11, resulting in increased phosphorylation of AKT1, MAPK1/ERK2 and/or MAPK3/ERK1, PDCD6IP/ALIX and STAM, and in increased cell proliferation. Phosphorylation at Tyr-1008 is important for interaction with PTPN11. Phosphorylation at Tyr-1008 and Tyr-1020 is important for interaction with PLCG1. Dephosphorylated by PTPRJ at Tyr-750, Tyr-856, Tyr-1008 and Tyr-1020. Dephosphorylated by PTPN2 at Tyr-578 and Tyr-1020. Post-translationally, N-glycosylated. Ubiquitinated. After autophosphorylation, the receptor is polyubiquitinated, leading to its degradation. In terms of tissue distribution, weakly expressed in glomerular mesangial cells and interstitial cells. Up-regulated in areas of renal fibrosis. In mice with unilateral ureteral obstruction, increased expression in interstitial cells at day 4 and expression is markedly elevated at day 7 and is maximal at day 14.

The protein localises to the cell membrane. It is found in the cytoplasmic vesicle. The protein resides in the lysosome lumen. The enzyme catalyses L-tyrosyl-[protein] + ATP = O-phospho-L-tyrosyl-[protein] + ADP + H(+). With respect to regulation, present in an inactive conformation in the absence of bound ligand. Binding of PDGFB and/or PDGFD leads to dimerization and activation by autophosphorylation on tyrosine residues. Its function is as follows. Tyrosine-protein kinase that acts as a cell-surface receptor for homodimeric PDGFB and PDGFD and for heterodimers formed by PDGFA and PDGFB, and plays an essential role in the regulation of embryonic development, cell proliferation, survival, differentiation, chemotaxis and migration. Plays an essential role in blood vessel development by promoting proliferation, migration and recruitment of pericytes and smooth muscle cells to endothelial cells. Plays a role in the migration of vascular smooth muscle cells and the formation of neointima at vascular injury sites. Required for normal development of the cardiovascular system. Required for normal recruitment of pericytes (mesangial cells) in the kidney glomerulus, and for normal formation of a branched network of capillaries in kidney glomeruli. Promotes rearrangement of the actin cytoskeleton and the formation of membrane ruffles. Binding of its cognate ligands - homodimeric PDGFB, heterodimers formed by PDGFA and PDGFB or homodimeric PDGFD -leads to the activation of several signaling cascades; the response depends on the nature of the bound ligand and is modulated by the formation of heterodimers between PDGFRA and PDGFRB. Phosphorylates PLCG1, PIK3R1, PTPN11, RASA1/GAP, CBL, SHC1 and NCK1. Activation of PLCG1 leads to the production of the cellular signaling molecules diacylglycerol and inositol 1,4,5-trisphosphate, mobilization of cytosolic Ca(2+) and the activation of protein kinase C. Phosphorylation of PIK3R1, the regulatory subunit of phosphatidylinositol 3-kinase, leads to the activation of the AKT1 signaling pathway. Phosphorylation of SHC1, or of the C-terminus of PTPN11, creates a binding site for GRB2, resulting in the activation of HRAS, RAF1 and down-stream MAP kinases, including MAPK1/ERK2 and/or MAPK3/ERK1. Promotes phosphorylation and activation of SRC family kinases. Promotes phosphorylation of PDCD6IP/ALIX and STAM. Receptor signaling is down-regulated by protein phosphatases that dephosphorylate the receptor and its down-stream effectors, and by rapid internalization of the activated receptor. The protein is Platelet-derived growth factor receptor beta (Pdgfrb) of Mus musculus (Mouse).